The following is a 158-amino-acid chain: GTP-dependent dephospho-CoA kinase (158 aa).

Positions 35, 36, 54, 56, 109, and 132 each coordinate GTP.

The protein belongs to the GTP-dependent DPCK family.

It catalyses the reaction 3'-dephospho-CoA + GTP = GDP + CoA + H(+). It participates in cofactor biosynthesis; coenzyme A biosynthesis. In terms of biological role, catalyzes the GTP-dependent phosphorylation of the 3'-hydroxyl group of dephosphocoenzyme A to form coenzyme A (CoA). The protein is GTP-dependent dephospho-CoA kinase of Methanococcus maripaludis (strain C7 / ATCC BAA-1331).